A 140-amino-acid polypeptide reads, in one-letter code: Short-chain diamines transporter (140 aa).

The next 4 helical transmembrane spans lie at 7–27 (IFHAVLFELMALAIIVPAAAL), 36–56 (LALVGIGLSLYTVVWNYIYNL), 79–99 (VGFEGGLIFISIPVIAWFLEI), and 105–125 (LMLEAGFLVFFLFYATGFNWL).

It belongs to the proteobacterial antimicrobial compound efflux (PACE) (TC 2.A.117) family.

It localises to the cell inner membrane. In terms of biological role, mediates the efflux of short-chain diamines when energized by an electrochemical gradient. Confers resistance to chlorhexidine, benzalkonium, proflavine and acriflavine. Mediates efflux of both proflavine and acriflavine via an energy-dependent mechanism. The polypeptide is Short-chain diamines transporter (Vibrio parahaemolyticus serotype O3:K6 (strain RIMD 2210633)).